A 226-amino-acid polypeptide reads, in one-letter code: MGFWLSLCGAVVLVAYLLGSFPTGYIAVKQLKGIDIREVGSGSTGATNVLRTLGKGPGAFVLGLDCLKGVLAIALVYYLFTFASNQNLIPTTVNIELWQPWLVTLAGIAAILGHSKSIFLGFTGGKSVATSLGILLAMNWQVGLATFGVFAVVVAISRIVSLSSIMGAIAVSIVMVFLQQPLPYILFGIAGGLYVILRHRSNIERLLAGTEPKIGQKLVTETEQSA.

Helical transmembrane passes span Met1–Phe21, Phe60–Phe80, Leu102–Phe122, Ile134–Val154, Ile159–Leu178, and Leu182–Leu197.

This sequence belongs to the PlsY family. In terms of assembly, probably interacts with PlsX.

The protein resides in the cell inner membrane. It catalyses the reaction an acyl phosphate + sn-glycerol 3-phosphate = a 1-acyl-sn-glycero-3-phosphate + phosphate. It participates in lipid metabolism; phospholipid metabolism. Its function is as follows. Catalyzes the transfer of an acyl group from acyl-phosphate (acyl-PO(4)) to glycerol-3-phosphate (G3P) to form lysophosphatidic acid (LPA). This enzyme utilizes acyl-phosphate as fatty acyl donor, but not acyl-CoA or acyl-ACP. In Nostoc sp. (strain PCC 7120 / SAG 25.82 / UTEX 2576), this protein is Glycerol-3-phosphate acyltransferase.